We begin with the raw amino-acid sequence, 826 residues long: Zinc phosphodiesterase ELAC protein 2 (826 aa).

The N-terminal 16 residues, 1–16, are a transit peptide targeting the mitochondrion; that stretch reads MWALCSLLRSAAGRTM. A compositionally biased stretch (polar residues) spans 15-24; it reads TMSQGRTISQ. 2 disordered regions span residues 15–51 and 189–231; these read TMSQ…PSGC and QRRG…VSQR. Over residues 27-38 the composition is skewed to basic and acidic residues; that stretch reads ARRERPRKDPLR. Serine 199, serine 208, serine 212, serine 229, serine 618, and serine 736 each carry phosphoserine. The segment covering 208–224 has biased composition (basic and acidic residues); that stretch reads SPERSSDSESNENEPHL. Positions 798 to 826 are disordered; sequence ELAGGLEDGEPQQKRAHTEEPQAKKVRAQ. The segment covering 808–820 has biased composition (basic and acidic residues); that stretch reads PQQKRAHTEEPQA.

It belongs to the RNase Z family. Homodimer. Interacts with PTCD1. The cofactor is Zn(2+).

The protein localises to the mitochondrion. The protein resides in the mitochondrion matrix. Its subcellular location is the mitochondrion nucleoid. It is found in the nucleus. It catalyses the reaction Endonucleolytic cleavage of RNA, removing extra 3' nucleotides from tRNA precursor, generating 3' termini of tRNAs. A 3'-hydroxy group is left at the tRNA terminus and a 5'-phosphoryl group is left at the trailer molecule.. Functionally, zinc phosphodiesterase, which displays mitochondrial tRNA 3'-processing endonuclease activity. Involved in tRNA maturation, by removing a 3'-trailer from precursor tRNA. Associates with mitochondrial DNA complexes at the nucleoids to initiate RNA processing and ribosome assembly. This is Zinc phosphodiesterase ELAC protein 2 (ELAC2) from Gorilla gorilla gorilla (Western lowland gorilla).